We begin with the raw amino-acid sequence, 432 residues long: Trigger factor (432 aa).

Residues 161-246 (EDRVTIDFTG…LKKVEERELP (86 aa)) form the PPIase FKBP-type domain.

Belongs to the FKBP-type PPIase family. Tig subfamily.

The protein localises to the cytoplasm. It catalyses the reaction [protein]-peptidylproline (omega=180) = [protein]-peptidylproline (omega=0). Functionally, involved in protein export. Acts as a chaperone by maintaining the newly synthesized protein in an open conformation. Functions as a peptidyl-prolyl cis-trans isomerase. This Salmonella schwarzengrund (strain CVM19633) protein is Trigger factor.